Reading from the N-terminus, the 467-residue chain is Zinc finger and BTB domain-containing protein 43 (467 aa).

At M1 the chain carries N-acetylmethionine. The BTB domain maps to 33–97; it reads CDVSIVVQGH…SYTGRLVMPA (65 aa). Disordered regions lie at residues 134–153 and 162–225; these read LNHGSDHQSPSSSSYNGLVE and HTDF…SAEF. Basic and acidic residues-rich tracts occupy residues 164–174 and 182–194; these read DFPKAQELRDG and KDELSSQLTEHEY. Residues K182, K241, K247, K297, and K358 each participate in a glycyl lysine isopeptide (Lys-Gly) (interchain with G-Cter in SUMO2) cross-link. The C2H2-type 1; atypical zinc-finger motif lies at 373–394; that stretch reads YPCQCGKSFTHKSQRDRHMSMH. A C2H2-type 2 zinc finger spans residues 400–422; sequence YGCGVCGKKFKMKHHLVGHMKIH. T423 is subject to Phosphothreonine. The segment at 428–450 adopts a C2H2-type 3; atypical zinc-finger fold; sequence YECNICAKRFMWRDSFHRHVTSC. Residue K458 forms a Glycyl lysine isopeptide (Lys-Gly) (interchain with G-Cter in SUMO2) linkage.

The protein belongs to the krueppel C2H2-type zinc-finger protein family. In terms of assembly, interacts with BDP1.

The protein localises to the nucleus. In terms of biological role, may be involved in transcriptional regulation. This is Zinc finger and BTB domain-containing protein 43 (ZBTB43) from Homo sapiens (Human).